The sequence spans 171 residues: S-ribosylhomocysteine lyase (171 aa).

Histidine 54, histidine 58, and cysteine 128 together coordinate Fe cation.

Belongs to the LuxS family. In terms of assembly, homodimer. Fe cation is required as a cofactor.

It carries out the reaction S-(5-deoxy-D-ribos-5-yl)-L-homocysteine = (S)-4,5-dihydroxypentane-2,3-dione + L-homocysteine. Its function is as follows. Involved in the synthesis of autoinducer 2 (AI-2) which is secreted by bacteria and is used to communicate both the cell density and the metabolic potential of the environment. The regulation of gene expression in response to changes in cell density is called quorum sensing. Catalyzes the transformation of S-ribosylhomocysteine (RHC) to homocysteine (HC) and 4,5-dihydroxy-2,3-pentadione (DPD). This Campylobacter concisus (strain 13826) protein is S-ribosylhomocysteine lyase.